Reading from the N-terminus, the 475-residue chain is Ribulose bisphosphate carboxylase large chain (475 aa).

The propeptide occupies 1–2 (MS). Pro-3 carries the post-translational modification N-acetylproline. Lys-14 is modified (N6,N6,N6-trimethyllysine). Substrate contacts are provided by Asn-123 and Thr-173. Residue Lys-175 is the Proton acceptor of the active site. Lys-177 provides a ligand contact to substrate. The Mg(2+) site is built by Lys-201, Asp-203, and Glu-204. Position 201 is an N6-carboxylysine (Lys-201). His-294 serves as the catalytic Proton acceptor. Substrate is bound by residues Arg-295, His-327, and Ser-379.

It belongs to the RuBisCO large chain family. Type I subfamily. In terms of assembly, heterohexadecamer of 8 large chains and 8 small chains. Mg(2+) serves as cofactor.

It is found in the plastid. It localises to the chloroplast. It carries out the reaction 2 (2R)-3-phosphoglycerate + 2 H(+) = D-ribulose 1,5-bisphosphate + CO2 + H2O. The catalysed reaction is D-ribulose 1,5-bisphosphate + O2 = 2-phosphoglycolate + (2R)-3-phosphoglycerate + 2 H(+). Its function is as follows. RuBisCO catalyzes two reactions: the carboxylation of D-ribulose 1,5-bisphosphate, the primary event in carbon dioxide fixation, as well as the oxidative fragmentation of the pentose substrate in the photorespiration process. Both reactions occur simultaneously and in competition at the same active site. This is Ribulose bisphosphate carboxylase large chain from Coleochaete orbicularis (Charophycean green alga).